A 178-amino-acid chain; its full sequence is Anthranilate synthase component 2 (178 aa).

The Glutamine amidotransferase type-1 domain occupies 1-178; the sequence is MIVVVDCKDS…RNFVEMCHDG (178 aa). 49 to 51 provides a ligand contact to L-glutamine; the sequence is GPG. Catalysis depends on Cys71, which acts as the Nucleophile; for GATase activity. Residues Gln75 and 120–121 contribute to the L-glutamine site; that span reads SL. Active-site for GATase activity residues include His155 and Glu157.

As to quaternary structure, heterotetramer consisting of two non-identical subunits: a beta subunit (TrpG) and a large alpha subunit (TrpE).

It catalyses the reaction chorismate + L-glutamine = anthranilate + pyruvate + L-glutamate + H(+). It participates in amino-acid biosynthesis; L-tryptophan biosynthesis; L-tryptophan from chorismate: step 1/5. In terms of biological role, part of a heterotetrameric complex that catalyzes the two-step biosynthesis of anthranilate, an intermediate in the biosynthesis of L-tryptophan. In the first step, the glutamine-binding beta subunit (TrpG) of anthranilate synthase (AS) provides the glutamine amidotransferase activity which generates ammonia as a substrate that, along with chorismate, is used in the second step, catalyzed by the large alpha subunit of AS (TrpE) to produce anthranilate. In the absence of TrpG, TrpE can synthesize anthranilate directly from chorismate and high concentrations of ammonia. This chain is Anthranilate synthase component 2 (trpG), found in Archaeoglobus fulgidus (strain ATCC 49558 / DSM 4304 / JCM 9628 / NBRC 100126 / VC-16).